The sequence spans 266 residues: Family of serine hydrolases 3 (266 aa).

Active-site charge relay system residues include S117, D180, and H209.

This sequence belongs to the AB hydrolase 3 family.

In terms of biological role, serine hydrolase of unknown specificity. The sequence is that of Family of serine hydrolases 3 (FSH3) from Saccharomyces cerevisiae (strain ATCC 204508 / S288c) (Baker's yeast).